Here is a 550-residue protein sequence, read N- to C-terminus: Carboxylesterase 4A (550 aa).

A signal peptide spans 1 to 20; it reads MNWILCLSLTLLLVVQTAWG. Cysteine 88 and cysteine 116 are oxidised to a cystine. The Acyl-ester intermediate role is filled by serine 221. Residues cysteine 273 and cysteine 284 are joined by a disulfide bond. Asparagine 276 carries N-linked (GlcNAc...) asparagine glycosylation. Glutamate 353 acts as the Charge relay system in catalysis. An N-linked (GlcNAc...) asparagine glycan is attached at asparagine 386. Residue histidine 465 is the Charge relay system of the active site.

The protein belongs to the type-B carboxylesterase/lipase family.

It is found in the secreted. Its function is as follows. Probable carboxylesterase. This is Carboxylesterase 4A (CES4A) from Bos taurus (Bovine).